A 226-amino-acid chain; its full sequence is Late protein I226R (226 aa).

An N-terminal signal peptide occupies residues 1–16; sequence MKMETFLVCLFHNADG. N-linked (GlcNAc...) asparagine; by host glycans are attached at residues asparagine 142 and asparagine 164.

Belongs to the asfivirus I226R family.

In terms of biological role, plays a role in the inhibition of host NF-kappa-B and IRF3 signaling pathways. Mechanistically, promotes the degradation of host IKBKG through enhancing its ubiquitination leading to inhibition of both pathways. The chain is Late protein I226R from African swine fever virus (isolate Tick/South Africa/Pretoriuskop Pr4/1996) (ASFV).